A 128-amino-acid chain; its full sequence is UPF0102 protein KPN78578_35270 (128 aa).

The disordered stretch occupies residues 1–20; the sequence is MAQVPAGKNRSGQLSKQTGD.

Belongs to the UPF0102 family.

The polypeptide is UPF0102 protein KPN78578_35270 (Klebsiella pneumoniae subsp. pneumoniae (strain ATCC 700721 / MGH 78578)).